A 350-amino-acid chain; its full sequence is Delta(6)-protoilludene synthase STEHIDRAFT_64702 (350 aa).

Asp89, Asn225, Ser229, and Glu233 together coordinate Mg(2+). The short motif at 89–93 is the D(D/E)XX(D/E) motif element; it reads DEHSD. The short motif at 225 to 233 is the NSE motif element; sequence NDIVSYNIE. Positions 314 and 315 each coordinate (2E,6E)-farnesyl diphosphate.

It belongs to the terpene synthase family. Requires Mg(2+) as cofactor. Mn(2+) serves as cofactor. It depends on Ca(2+) as a cofactor. Ni(2+) is required as a cofactor. The cofactor is Co(2+).

It carries out the reaction (2E,6E)-farnesyl diphosphate = Delta(6)-protoilludene + diphosphate. The enzyme catalyses (2E,6E)-farnesyl diphosphate = alpha-selinene + diphosphate. Its activity is regulated as follows. Ca(2+) switches the cyclization mechanism of delta(6)-protoilludene synthase from 1,11 to 1,10 cyclization which leads to the production of beta-elemene. Functionally, terpene cyclase that catalyzes the cyclization of farnesyl diphosphate (FPP) to delta(6)-protoilludene. In presence of Ca(2+), a significant switch from 1,11 to a dual 1,11/1,10 cyclization occurs, producing beta-elemene as the major product, with lower levels of delta(6)-protoilludene and (E)-beta-caryophyllene, and traces of beta-selinene and alpha-selinene. In Stereum hirsutum (strain FP-91666) (White-rot fungus), this protein is Delta(6)-protoilludene synthase STEHIDRAFT_64702.